A 292-amino-acid polypeptide reads, in one-letter code: Protease HtpX (292 aa).

2 helical membrane-spanning segments follow: residues Val-5–Val-25 and Gly-35–Ser-55. His-140 lines the Zn(2+) pocket. Glu-141 is an active-site residue. His-144 is a Zn(2+) binding site. A run of 2 helical transmembrane segments spans residues Leu-155–Ile-175 and Ile-193–Phe-213. A Zn(2+)-binding site is contributed by Glu-218.

This sequence belongs to the peptidase M48B family. Zn(2+) serves as cofactor.

The protein resides in the cell inner membrane. The polypeptide is Protease HtpX (Xanthomonas campestris pv. campestris (strain 8004)).